The sequence spans 377 residues: MRTQIYISVTVLILLLKKSDLEAVRVPSPESVSVQCDSYGVEARWEYPEVHQDVYFQVKVKDEFTERDSSRTKNLHLNISSMLFRPAYNRYCVTVTAVRGGEKSDPSDFFIFSFNENAAAYIKCSLDFPEVELSPKDGRLHVQFTNPLHLYRNSPALRDLSEDLKYCIETDQGKNKVCETCQMKQNASCETSVVFSEHRGEYCFSLTGNIGQRIFNPRSSCFTGDIRRYTPFTVYLYPVLGVTLTLLFITGIIILLEKKCNSEMKKKVPSMFPHFFDFGETQSHLPKTLCVVADKVEPHLQIELVEDPEEQTSLVPLSDNKDLEGVYSEDKNSYGPNDLVEDEQSDLSDFYDCPHAPKQKREMSPGDTVDSYGPRLL.

Positions 1–23 (MRTQIYISVTVLILLLKKSDLEA) are cleaved as a signal peptide. At 24-235 (VRVPSPESVS…IRRYTPFTVY (212 aa)) the chain is on the extracellular side. The Fibronectin type-III domain maps to 26 to 117 (VPSPESVSVQ…DFFIFSFNEN (92 aa)). 2 N-linked (GlcNAc...) asparagine glycosylation sites follow: asparagine 78 and asparagine 186. Residues 236-256 (LYPVLGVTLTLLFITGIIILL) traverse the membrane as a helical segment. The Cytoplasmic portion of the chain corresponds to 257 to 377 (EKKCNSEMKK…TVDSYGPRLL (121 aa)). A disordered region spans residues 326–377 (VYSEDKNSYGPNDLVEDEQSDLSDFYDCPHAPKQKREMSPGDTVDSYGPRLL).

It belongs to the type II cytokine receptor family. As to expression, highly expressed in spleen. Also detected in brain, kidney, gill, intestine and heart. Expressed at very low levels in muscle. In immune cell populations, shows highest expression in monocytes, and slightly lower expression in peripheral blood leukocytes, splenocytes, neutrophils and mature macrophages.

It is found in the cell membrane. Functionally, receptor which shows binding specificity for the cytokine ifng1r (interferon gamma-related). The polypeptide is Interferon gamma receptor 1 (Carassius auratus (Goldfish)).